A 416-amino-acid polypeptide reads, in one-letter code: Gamma-glutamyl phosphate reductase (416 aa).

The protein belongs to the gamma-glutamyl phosphate reductase family.

It is found in the cytoplasm. It carries out the reaction L-glutamate 5-semialdehyde + phosphate + NADP(+) = L-glutamyl 5-phosphate + NADPH + H(+). Its pathway is amino-acid biosynthesis; L-proline biosynthesis; L-glutamate 5-semialdehyde from L-glutamate: step 2/2. Its function is as follows. Catalyzes the NADPH-dependent reduction of L-glutamate 5-phosphate into L-glutamate 5-semialdehyde and phosphate. The product spontaneously undergoes cyclization to form 1-pyrroline-5-carboxylate. The chain is Gamma-glutamyl phosphate reductase from Streptococcus pyogenes serotype M4 (strain MGAS10750).